A 364-amino-acid polypeptide reads, in one-letter code: Dihydroorotate dehydrogenase (quinone) (364 aa).

FMN is bound by residues 61-65 (AGFDK) and Ser85. Substrate is bound at residue Lys65. 110–114 (NRMGF) is a binding site for substrate. Asn139 and Asn170 together coordinate FMN. Asn170 lines the substrate pocket. Residue Ser173 is the Nucleophile of the active site. Asn175 provides a ligand contact to substrate. Lys214 and Ser242 together coordinate FMN. Substrate is bound at residue 243–244 (NT). FMN contacts are provided by residues Gly266, Gly295, and 316 to 317 (YS).

The protein belongs to the dihydroorotate dehydrogenase family. Type 2 subfamily. Monomer. It depends on FMN as a cofactor.

The protein localises to the cell membrane. It carries out the reaction (S)-dihydroorotate + a quinone = orotate + a quinol. The protein operates within pyrimidine metabolism; UMP biosynthesis via de novo pathway; orotate from (S)-dihydroorotate (quinone route): step 1/1. In terms of biological role, catalyzes the conversion of dihydroorotate to orotate with quinone as electron acceptor. This chain is Dihydroorotate dehydrogenase (quinone), found in Bradyrhizobium sp. (strain BTAi1 / ATCC BAA-1182).